A 188-amino-acid polypeptide reads, in one-letter code: Deoxyuridine 5'-triphosphate nucleotidohydrolase (188 aa).

The interval 1 to 34 (MGEMTSGVDGHGSTKRTTSEAQKMDFNTDRGSAI) is disordered.

It belongs to the dUTPase family. It depends on Mg(2+) as a cofactor.

The catalysed reaction is dUTP + H2O = dUMP + diphosphate + H(+). In terms of biological role, this enzyme is involved in nucleotide metabolism: it produces dUMP, the immediate precursor of thymidine nucleotides and it decreases the intracellular concentration of dUTP so that uracil cannot be incorporated into DNA. In Ictaluridae (bullhead catfishes), this protein is Deoxyuridine 5'-triphosphate nucleotidohydrolase (49).